We begin with the raw amino-acid sequence, 483 residues long: Serine/threonine-protein phosphatase 2A regulatory subunit phr2AB (483 aa).

WD repeat units follow at residues 22–61 and 88–129; these read SDAN…QSSK and EIEE…IKQV. Residues 132 to 152 are disordered; it reads SATTTGPSYNGSLASNNTRSP. WD repeat units lie at residues 206 to 244, 255 to 295, 314 to 352, and 369 to 410; these read AHAY…ECFN, DLTE…LCDN, EIIS…KPVK, and ENDC…DVCL. The disordered stretch occupies residues 421–443; sequence TKTLTTKMKLRSSKKEPKKPEDI. Basic and acidic residues predominate over residues 433–443; that stretch reads SKKEPKKPEDI. A WD 7 repeat occupies 449-483; the sequence is EYTKKTLHCAWHPKDNLIAVGAANTVYLYAATENK.

It belongs to the phosphatase 2A regulatory subunit B family. As to quaternary structure, PP2A consists of a trimeric holoenzyme, composed of a 37 kDa catalytic subunit (C subunit) and a 65 kDa constant regulatory subunit (A subunit), that associates with a variety of regulatory subunits (B subunit) such as phr2AB (B55) and psrA (B56 homolog). The trimer may partially dissociates into a core 'AC' dimer equally active compared to the trimer.

It is found in the cytoplasm. The protein localises to the cytosol. Its subcellular location is the cytoskeleton. It localises to the microtubule organizing center. The protein resides in the centrosome. Functionally, the B regulatory subunit might modulate substrate selectivity and catalytic activity, and might also direct the localization of the catalytic enzyme to a particular subcellular compartment. The chain is Serine/threonine-protein phosphatase 2A regulatory subunit phr2AB (phr2aB) from Dictyostelium discoideum (Social amoeba).